Consider the following 279-residue polypeptide: Phosphatidylglycerol--prolipoprotein diacylglyceryl transferase (279 aa).

The next 3 membrane-spanning stretches (helical) occupy residues 18 to 38 (LSVR…YFVA), 55 to 75 (IIFY…VIFQ), and 89 to 109 (IWHG…AGVI). Residue R137 coordinates a 1,2-diacyl-sn-glycero-3-phospho-(1'-sn-glycerol). The next 2 membrane-spanning stretches (helical) occupy residues 203–223 (LGET…FIEG) and 235–255 (IRVA…LIVY).

It belongs to the Lgt family.

It is found in the cell membrane. It carries out the reaction L-cysteinyl-[prolipoprotein] + a 1,2-diacyl-sn-glycero-3-phospho-(1'-sn-glycerol) = an S-1,2-diacyl-sn-glyceryl-L-cysteinyl-[prolipoprotein] + sn-glycerol 1-phosphate + H(+). It participates in protein modification; lipoprotein biosynthesis (diacylglyceryl transfer). Catalyzes the transfer of the diacylglyceryl group from phosphatidylglycerol to the sulfhydryl group of the N-terminal cysteine of a prolipoprotein, the first step in the formation of mature lipoproteins. This is Phosphatidylglycerol--prolipoprotein diacylglyceryl transferase from Staphylococcus aureus (strain bovine RF122 / ET3-1).